We begin with the raw amino-acid sequence, 316 residues long: MPIPFYPHRSVLLEEVIEAFQPVQLKVFIDGTLGAGGHAEAILEHHPEIELYLGIDQDPNALNIANKRLEKWKQKILLKQGNFSQFDIFLKEIGFSSMDGLLVDLGVSSMQLDQPERGFSFSKDGPLDMRMNPEGKLTAADIVNTWSEHDLGKIFRDYGEEKKWRLAARTIVQARQVKQILTTTDLANLLKPAFAWNPKKGINPLTLIFQALRICVNRELDVLEQLVSKTFDYLKPGGRVAVISFHSLEDRIVKNELRLAASDKWETTGLGSGLFRDKKPVAKLVNRKPICPHEKEIKENPRSRSAKFRIAEKLEG.

S-adenosyl-L-methionine is bound by residues 36–38 (GGH), aspartate 56, phenylalanine 83, aspartate 104, and glutamine 111.

Belongs to the methyltransferase superfamily. RsmH family.

It localises to the cytoplasm. The catalysed reaction is cytidine(1402) in 16S rRNA + S-adenosyl-L-methionine = N(4)-methylcytidine(1402) in 16S rRNA + S-adenosyl-L-homocysteine + H(+). Its function is as follows. Specifically methylates the N4 position of cytidine in position 1402 (C1402) of 16S rRNA. The chain is Ribosomal RNA small subunit methyltransferase H from Protochlamydia amoebophila (strain UWE25).